A 202-amino-acid chain; its full sequence is Imidazoleglycerol-phosphate dehydratase (202 aa).

It belongs to the imidazoleglycerol-phosphate dehydratase family.

The protein resides in the cytoplasm. It carries out the reaction D-erythro-1-(imidazol-4-yl)glycerol 3-phosphate = 3-(imidazol-4-yl)-2-oxopropyl phosphate + H2O. Its pathway is amino-acid biosynthesis; L-histidine biosynthesis; L-histidine from 5-phospho-alpha-D-ribose 1-diphosphate: step 6/9. This Brucella anthropi (strain ATCC 49188 / DSM 6882 / CCUG 24695 / JCM 21032 / LMG 3331 / NBRC 15819 / NCTC 12168 / Alc 37) (Ochrobactrum anthropi) protein is Imidazoleglycerol-phosphate dehydratase.